A 360-amino-acid chain; its full sequence is Probable cinnamyl alcohol dehydrogenase 9 (360 aa).

Cysteine 50 lines the Zn(2+) pocket. Threonine 52 contacts NADP(+). Zn(2+) contacts are provided by histidine 72, glutamate 73, cysteine 103, cysteine 106, cysteine 109, cysteine 117, and cysteine 166. Residues threonine 170, 191–196, 214–219, threonine 254, glycine 278, and 301–303 contribute to the NADP(+) site; these read GLGGLG, SSSSTK, and SDV.

This sequence belongs to the zinc-containing alcohol dehydrogenase family. Homodimer. The cofactor is Zn(2+). As to expression, expressed in the vasculature of the primary root and elongation regions. Expressed in the hypocotyl, cotyledon veins, vasculature of the first rosette leaves, and hydathodes. In stems, expressed in the vascular cambium, interfascicular cambium, developing xylem, and phloem. Expressed in the entire floral organs at late developing stage, and in the abscission, style and stigmatic regions of siliques and seed funicules.

The enzyme catalyses (E)-cinnamyl alcohol + NADP(+) = (E)-cinnamaldehyde + NADPH + H(+). Its pathway is aromatic compound metabolism; phenylpropanoid biosynthesis. Its function is as follows. Involved in lignin biosynthesis. May catalyze the final step specific for the production of lignin monomers, like coniferyl alcohol, sinapyl alcohol and 4-coumaryl alcohol. This Arabidopsis thaliana (Mouse-ear cress) protein is Probable cinnamyl alcohol dehydrogenase 9 (CAD9).